We begin with the raw amino-acid sequence, 170 residues long: MAAGFNWFLVLSSVFLCNLVKTFLPSISSFLSKIFHKDADQEMEMRTEIQNMKMELSTISMMDEFARYARLERKINKMTDQLKTLVKSRTAQQAKMKWIVNIAFYILQAALMISLILKYYADPVTVVPSKWIAPLERLVAFPSGVAGGVGITCWLVVCNKVVALILQAVS.

Residues 1–6 (MAAGFN) are Lumenal-facing. A helical transmembrane segment spans residues 7–27 (WFLVLSSVFLCNLVKTFLPSI). Over 28-96 (SSFLSKIFHK…KSRTAQQAKM (69 aa)) the chain is Cytoplasmic. An interaction with GET3/TRC40 region spans residues 35–93 (FHKDADQEMEMRTEIQNMKMELSTISMMDEFARYARLERKINKMTDQLKTLVKSRTAQQ). A coiled-coil region spans residues 61-91 (MMDEFARYARLERKINKMTDQLKTLVKSRTA). Residues 97-117 (KWIVNIAFYILQAALMISLIL) form a helical membrane-spanning segment. The Lumenal portion of the chain corresponds to 118 to 137 (KYYADPVTVVPSKWIAPLER). The chain crosses the membrane as a helical span at residues 138-158 (LVAFPSGVAGGVGITCWLVVC). Residues 159-170 (NKVVALILQAVS) lie on the Cytoplasmic side of the membrane.

The protein belongs to the WRB/GET1 family. In terms of assembly, component of the Golgi to ER traffic (GET) complex, which is composed of GET1/WRB, CAMLG/GET2 and GET3/TRC40. Within the complex, GET1 and CAMLG form a heterotetramer which is stabilized by phosphatidylinositol binding and which binds to the GET3 homodimer.

It localises to the endoplasmic reticulum membrane. Required for the post-translational delivery of tail-anchored (TA) proteins to the endoplasmic reticulum (ER). Together with CAMLG/GET2, acts as a membrane receptor for soluble GET3/TRC40, which recognizes and selectively binds the transmembrane domain of TA proteins in the cytosol. Required to ensure correct topology and ER insertion of CAMLG. This Danio rerio (Zebrafish) protein is Guided entry of tail-anchored proteins factor 1.